The following is a 657-amino-acid chain: Glycogen debranching enzyme (657 aa).

Aspartate 336 functions as the Nucleophile in the catalytic mechanism. The Proton donor role is filled by glutamate 371. A compositionally biased stretch (basic and acidic residues) spans 458 to 467; that stretch reads NEANGEENRD. Residues 458-479 are disordered; sequence NEANGEENRDGTNNNYSNNHGK.

This sequence belongs to the glycosyl hydrolase 13 family.

The catalysed reaction is Hydrolysis of (1-&gt;6)-alpha-D-glucosidic linkages to branches with degrees of polymerization of three or four glucose residues in limit dextrin.. Its pathway is glycan degradation; glycogen degradation. Its function is as follows. Removes maltotriose and maltotetraose chains that are attached by 1,6-alpha-linkage to the limit dextrin main chain, generating a debranched limit dextrin. The chain is Glycogen debranching enzyme from Escherichia coli (strain 55989 / EAEC).